The following is a 313-amino-acid chain: tRNA dimethylallyltransferase (313 aa).

11–18 (GPTAGGKT) is a binding site for ATP. 13 to 18 (TAGGKT) contributes to the substrate binding site. 3 interaction with substrate tRNA regions span residues 36-39 (DSAL), 160-164 (QRIGR), and 243-248 (RCVGYR).

Belongs to the IPP transferase family. In terms of assembly, monomer. Mg(2+) serves as cofactor.

The catalysed reaction is adenosine(37) in tRNA + dimethylallyl diphosphate = N(6)-dimethylallyladenosine(37) in tRNA + diphosphate. Catalyzes the transfer of a dimethylallyl group onto the adenine at position 37 in tRNAs that read codons beginning with uridine, leading to the formation of N6-(dimethylallyl)adenosine (i(6)A). This chain is tRNA dimethylallyltransferase, found in Neisseria meningitidis serogroup C / serotype 2a (strain ATCC 700532 / DSM 15464 / FAM18).